A 117-amino-acid polypeptide reads, in one-letter code: Large ribosomal subunit protein uL18 (117 aa).

This sequence belongs to the universal ribosomal protein uL18 family. In terms of assembly, part of the 50S ribosomal subunit; part of the 5S rRNA/L5/L18/L25 subcomplex. Contacts the 5S and 23S rRNAs.

Functionally, this is one of the proteins that bind and probably mediate the attachment of the 5S RNA into the large ribosomal subunit, where it forms part of the central protuberance. The sequence is that of Large ribosomal subunit protein uL18 from Thiobacillus denitrificans (strain ATCC 25259 / T1).